A 90-amino-acid chain; its full sequence is Small ribosomal subunit protein uS15 (90 aa).

It belongs to the universal ribosomal protein uS15 family. In terms of assembly, part of the 30S ribosomal subunit. Forms a bridge to the 50S subunit in the 70S ribosome, contacting the 23S rRNA.

Functionally, one of the primary rRNA binding proteins, it binds directly to 16S rRNA where it helps nucleate assembly of the platform of the 30S subunit by binding and bridging several RNA helices of the 16S rRNA. In terms of biological role, forms an intersubunit bridge (bridge B4) with the 23S rRNA of the 50S subunit in the ribosome. This Campylobacter curvus (strain 525.92) protein is Small ribosomal subunit protein uS15.